A 25-amino-acid chain; its full sequence is VIGGTNASPGEIPWQLSQQRQSGSW.

One can recognise a Peptidase S1 domain in the interval 1 to 25; the sequence is VIGGTNASPGEIPWQLSQQRQSGSW. The segment at 1–25 is disordered; that stretch reads VIGGTNASPGEIPWQLSQQRQSGSW. Residues 15 to 25 show a composition bias toward polar residues; the sequence is QLSQQRQSGSW.

The protein belongs to the peptidase S1 family. Heterodimer of a large and a small subunit held together by hydrophobic interactions.

Functionally, cleaves the carboxyl side of basic amino acids, small neutral amino acids, and Met residue. It is also a plasminogen activator. This chain is Fibrinolytic enzyme large subunit, found in Eisenia fetida (Red wiggler worm).